Reading from the N-terminus, the 907-residue chain is Envelope glycoprotein B (907 aa).

The signal sequence occupies residues 1–22; the sequence is MESRIWCLVVCVNLCIVCLGAA. Over 23-751 the chain is Virion surface; it reads VSSSSTRGTS…EGVATFLKNP (729 aa). Residues 29–62 are disordered; that stretch reads RGTSATHSHHSSHTTSAAHSRSGSVSQRVTSSQT. Positions 41-62 are enriched in low complexity; that stretch reads HTTSAAHSRSGSVSQRVTSSQT. Residues N68, N73, and N85 are each glycosylated (N-linked (GlcNAc...) asparagine; by host). 4 disulfides stabilise this stretch: C94/C551, C111/C507, C185/C250, and C344/C391. An involved in fusion and/or binding to host membrane region spans residues 152 to 158; the sequence is SYAYIHT. A glycan (N-linked (GlcNAc...) asparagine; by host) is linked at N208. Residues 237–244 are involved in fusion and/or binding to host membrane; that stretch reads GSTWLYRE. Residues N281, N286, N302, N341, N383, N405, N409, N417, N447, N452, N456, N466, N555, and N586 are each glycosylated (N-linked (GlcNAc...) asparagine; by host). Cysteines 574 and 611 form a disulfide. 2 hydrophobic membrane proximal region regions span residues 697 to 749 and 708 to 748; these read VEDK…TFLK and YLKG…ATFL. A helical membrane pass occupies residues 752–772; the sequence is FGAFTIILVAIAVVIIIYLIY. Residues 773–907 lie on the Intravirion side of the membrane; it reads TRQRRLCMQP…LKDSDEEENV (135 aa). Polar residues-rich tracts occupy residues 798–810 and 860–877; these read VTSGNTKDTSLQA and RAQQNGTDSLDGQTGTQD. 2 disordered regions span residues 798-838 and 860-907; these read VTSG…TAAP and RAQQ…EENV. Basic and acidic residues predominate over residues 878 to 887; the sequence is KGQKPNLLDR. Positions 895-898 match the Internalization motif motif; it reads YRHL.

The protein belongs to the herpesviridae glycoprotein B family. As to quaternary structure, homotrimer; disulfide-linked. Binds to heparan sulfate proteoglycans. Interacts with gH/gL heterodimer. Interacts with host C-type lectin CD209/DC-SIGN. Interacts with host ITGB1, EGFR, and PDGFRA. In terms of processing, a proteolytic cleavage by host furin generates two subunits that remain linked by disulfide bonds.

The protein localises to the virion membrane. The protein resides in the host cell membrane. It localises to the host endosome membrane. Its subcellular location is the host Golgi apparatus membrane. Its function is as follows. Envelope glycoprotein that plays a role in host cell entry, cell to-cell virus transmission, and fusion of infected cells. May be involved in the initial attachment via binding to heparan sulfate together with the gM/gN complex that binds heparin with higher affinity. Interacts with host integrin ITGB1, PDGFRA and EGFR that likely serve as postattachment entry receptors. Also participates in the fusion of viral and cellular membranes leading to virus entry into the host cell. Membrane fusion is mediated by the fusion machinery composed at least of gB and the heterodimer gH/gL. The chain is Envelope glycoprotein B from Homo sapiens (Human).